A 209-amino-acid chain; its full sequence is Uracil phosphoribosyltransferase (209 aa).

5-phospho-alpha-D-ribose 1-diphosphate is bound by residues Arg79, Arg104, and 131 to 139 (DPMLATGGS). Residues Val194 and 199–201 (GDA) contribute to the uracil site. Asp200 is a 5-phospho-alpha-D-ribose 1-diphosphate binding site.

The protein belongs to the UPRTase family. Mg(2+) serves as cofactor.

It catalyses the reaction UMP + diphosphate = 5-phospho-alpha-D-ribose 1-diphosphate + uracil. The protein operates within pyrimidine metabolism; UMP biosynthesis via salvage pathway; UMP from uracil: step 1/1. With respect to regulation, allosterically activated by GTP. Functionally, catalyzes the conversion of uracil and 5-phospho-alpha-D-ribose 1-diphosphate (PRPP) to UMP and diphosphate. The sequence is that of Uracil phosphoribosyltransferase from Bacillus cytotoxicus (strain DSM 22905 / CIP 110041 / 391-98 / NVH 391-98).